We begin with the raw amino-acid sequence, 813 residues long: MRRALRLLPLPLSIAICLPAMAADKPFNWGLCPTVDPLPGFDGAPAADPKAAEMRQQLPTDIEGDQLSGTSTTPQYQGNVALKRGDQFLGADNLRMDTETGNYIAEGNVRYQDTSFRMVADRAEGNQDTDTHKVTNIRYQLVERRGNGDAESVDLQGQVGQMHRSTYTTCDPSQPIWRVRAPEIDVDNGEGFGTARNAVLQIGNVPVLYFPWFKFPIDDRRQTGLLFPQFGLSRRNGFDYLQPIYLNLAPNYDATLLPRYMSKRGFMFGTEFRYLYEGGRGEVTGNYLPNDKLRDKDRGSVFYSGYHNVNSNWQARSSISWVSDTRYVEDFTSRLNGMGSTSSLQSTVGIYGTGETWTAGLMAERWQLTDYTLDERSLPYNRQPRAYFNWEKPFGIFEAGVYAEAVRFTHDDSYFVQPPSPSVPGEANNRDNNDKYVRTNIRNQEYGSGSRLDLKPYVSMPLSGAAWFFTPTLAWRYTAYQLDSTLAKTGPLTGDRSPSRSLPIASVDAGLYFDRETSLLGTNYLNTLEPRMYYLYVPYRDQDDLPVFDTRPFTFSYGQLFRDTRYTGADRQNDANQLTLAVTSRWLRQDDGREKLSLSAGQILYFSDSRVTINNSTNAVAGSEQTIDQGKSAWVVDANYMINDRWSMGATYQWNPNSRKEDLASLRTRYLLDNDGIINLAYRYRRNLIDNSDQLKQADFSFLYPINPSWSAVGRYYYSLQDRKPLEIIGGVQWDSCCLAVRGLVRRFVRNRDGQMDNSIQIEFVLKGLSSFGQNTDRTLRRAILGYYRDDLYLVPPSNTTTNPDDYDPNLIP.

The N-terminal stretch at 1–22 (MRRALRLLPLPLSIAICLPAMA) is a signal peptide.

The protein belongs to the LptD family. As to quaternary structure, component of the lipopolysaccharide transport and assembly complex. Interacts with LptE and LptA.

The protein localises to the cell outer membrane. In terms of biological role, together with LptE, is involved in the assembly of lipopolysaccharide (LPS) at the surface of the outer membrane. This Xanthomonas oryzae pv. oryzae (strain MAFF 311018) protein is LPS-assembly protein LptD.